Reading from the N-terminus, the 92-residue chain is Sarcosine oxidase subunit delta (92 aa).

Zn(2+) contacts are provided by Cys-7, Cys-10, His-57, and Cys-61.

It belongs to the SoxD family. As to quaternary structure, heterotetramer composed of subunits alpha (SoxA), beta (SoxB), gamma (SoxG) and delta (SoxD).

It is found in the cytoplasm. It catalyses the reaction sarcosine + (6S)-5,6,7,8-tetrahydrofolate + O2 = (6R)-5,10-methylene-5,6,7,8-tetrahydrofolate + glycine + H2O2. The enzyme catalyses sarcosine + O2 + H2O = formaldehyde + glycine + H2O2. In terms of biological role, in the presence of tetrahydrofolate, catalyzes the oxidative demethylation of sarcosine to yield glycine, 5,10-methylenetetrahydrofolate and hydrogen peroxide. In the absence of tetrahydrofolate, catalyzes the oxidative demethylation of sarcosine to yield glycine, formaldehyde and hydrogen peroxide. The sequence is that of Sarcosine oxidase subunit delta (soxD) from Rhizobium meliloti (strain 1021) (Ensifer meliloti).